We begin with the raw amino-acid sequence, 233 residues long: Ribonuclease 3 (233 aa).

An RNase III domain is found at 9 to 136; it reads LQHFWEQFHL…IIGSVYLSGG (128 aa). Mg(2+) is bound at residue Glu49. Asp53 is an active-site residue. Mg(2+) contacts are provided by Asp122 and Glu125. Glu125 is an active-site residue. Residues 162–231 enclose the DRBM domain; sequence DSKSALQEFV…ARAALALLKV (70 aa).

Belongs to the ribonuclease III family. In terms of assembly, homodimer. It depends on Mg(2+) as a cofactor.

It is found in the cytoplasm. It catalyses the reaction Endonucleolytic cleavage to 5'-phosphomonoester.. Digests double-stranded RNA. Involved in the processing of primary rRNA transcript to yield the immediate precursors to the large and small rRNAs (23S and 16S). Processes some mRNAs, and tRNAs when they are encoded in the rRNA operon. Processes pre-crRNA and tracrRNA of type II CRISPR loci if present in the organism. In Moorella thermoacetica (strain ATCC 39073 / JCM 9320), this protein is Ribonuclease 3.